The sequence spans 290 residues: L-proline cis-3-hydroxylase 1 (290 aa).

Fe cation contacts are provided by His-107, Asp-109, and His-158. Position 168 (Arg-168) interacts with 2-oxoglutarate.

It belongs to the L-proline cis-4-/cis-3-hydroxylase family. As to quaternary structure, homodimer. It depends on Fe(2+) as a cofactor.

It catalyses the reaction L-proline + 2-oxoglutarate + O2 = cis-3-hydroxy-L-proline + succinate + CO2. Its activity is regulated as follows. Inhibited by metal ions such as Co(2+), Zn(2+), Ni(2+) or Cu(2+). Is also inhibited by EDTA in vitro. Unlike the procollagen-proline cis-3- and trans-4-hydroxylases from mammals, does not necessarily require L-ascorbate for activity although it does increase the activity of the enzyme. Dioxygenase that catalyzes the 2-oxoglutarate-dependent selective hydroxylation of free L-proline to cis-3-hydroxy-L-proline (cis-3-Hyp). D-proline, trans-4-hydroxy-L-proline, cis-4-hydroxy-L-proline, cis-4-hydroxy-D-proline, and 3,4-dehydro-DL-proline are not substrates. The sequence is that of L-proline cis-3-hydroxylase 1 from Streptomyces sp.